Here is a 308-residue protein sequence, read N- to C-terminus: Acetaldehyde dehydrogenase 2 (308 aa).

Residue 9-12 (SGNI) coordinates NAD(+). The active-site Acyl-thioester intermediate is the Cys-127. Residues 158–166 (SAGPGTRAN) and Asn-286 contribute to the NAD(+) site.

It belongs to the acetaldehyde dehydrogenase family.

It carries out the reaction acetaldehyde + NAD(+) + CoA = acetyl-CoA + NADH + H(+). The protein is Acetaldehyde dehydrogenase 2 of Parafrankia sp. (strain EAN1pec).